Consider the following 695-residue polypeptide: Elongation factor G (695 aa).

Positions 5–280 (SHYRNIGIFA…AVIDFLPSPT (276 aa)) constitute a tr-type G domain. GTP contacts are provided by residues 14–21 (AHVDAGKT), 78–82 (DTPGH), and 132–135 (NKLD). Residues 279-299 (PTEVDPQPLTDEETGEPTGEV) form a disordered region.

This sequence belongs to the TRAFAC class translation factor GTPase superfamily. Classic translation factor GTPase family. EF-G/EF-2 subfamily.

It localises to the cytoplasm. Its function is as follows. Catalyzes the GTP-dependent ribosomal translocation step during translation elongation. During this step, the ribosome changes from the pre-translocational (PRE) to the post-translocational (POST) state as the newly formed A-site-bound peptidyl-tRNA and P-site-bound deacylated tRNA move to the P and E sites, respectively. Catalyzes the coordinated movement of the two tRNA molecules, the mRNA and conformational changes in the ribosome. The protein is Elongation factor G of Alteromonas mediterranea (strain DSM 17117 / CIP 110805 / LMG 28347 / Deep ecotype).